A 48-amino-acid polypeptide reads, in one-letter code: Glycine-rich RNA-binding protein 3 (48 aa).

In Populus euphratica (Euphrates poplar), this protein is Glycine-rich RNA-binding protein 3.